The primary structure comprises 361 residues: tRNA N6-adenosine threonylcarbamoyltransferase (361 aa).

Fe cation-binding residues include His-110 and His-114. Substrate is bound by residues 132 to 136 (LVSGG), Asp-165, Gly-178, Asp-182, and Asn-289. Residue Asp-317 coordinates Fe cation.

This sequence belongs to the KAE1 / TsaD family. It depends on Fe(2+) as a cofactor.

The protein resides in the cytoplasm. The catalysed reaction is L-threonylcarbamoyladenylate + adenosine(37) in tRNA = N(6)-L-threonylcarbamoyladenosine(37) in tRNA + AMP + H(+). Functionally, required for the formation of a threonylcarbamoyl group on adenosine at position 37 (t(6)A37) in tRNAs that read codons beginning with adenine. Is involved in the transfer of the threonylcarbamoyl moiety of threonylcarbamoyl-AMP (TC-AMP) to the N6 group of A37, together with TsaE and TsaB. TsaD likely plays a direct catalytic role in this reaction. The sequence is that of tRNA N6-adenosine threonylcarbamoyltransferase from Nitratidesulfovibrio vulgaris (strain ATCC 29579 / DSM 644 / CCUG 34227 / NCIMB 8303 / VKM B-1760 / Hildenborough) (Desulfovibrio vulgaris).